The chain runs to 306 residues: Homeobox protein CUP9 (306 aa).

A disordered region spans residues 75 to 123 (PAINSGGTSTTATPTASTVETSKTSSSAMDTQSQYGSSKKSKSASDDAK). The segment covering 79–96 (SGGTSTTATPTASTVETS) has biased composition (low complexity). Polar residues predominate over residues 97–110 (KTSSSAMDTQSQYG). The segment at residues 162 to 224 (NSGRRSNLPK…NVRRRKIFSD (63 aa)) is a DNA-binding region (homeobox; TALE-type).

Belongs to the TALE/CUP9 homeobox family.

It is found in the nucleus. Its function is as follows. Probable DNA-binding protein which plays a role in protecting yeast cells against copper toxicity. May regulate the expression of important copper homeostatic genes. This Saccharomyces cerevisiae (strain ATCC 204508 / S288c) (Baker's yeast) protein is Homeobox protein CUP9 (CUP9).